The following is a 92-amino-acid chain: Small ribosomal subunit protein uS19 (92 aa).

This sequence belongs to the universal ribosomal protein uS19 family.

Protein S19 forms a complex with S13 that binds strongly to the 16S ribosomal RNA. The protein is Small ribosomal subunit protein uS19 of Neisseria gonorrhoeae (strain ATCC 700825 / FA 1090).